The primary structure comprises 342 residues: Polycomb group RING finger protein 2 (342 aa).

An RING-type zinc finger spans residues 18 to 57 (CALCGGYFIDATTIVECLHSFCKTCIVRYLETNKYCPMCD). Glycyl lysine isopeptide (Lys-Gly) (interchain with G-Cter in SUMO2) cross-links involve residues Lys-51 and Lys-88. A Nuclear localization signal motif is present at residues 81 to 95 (KLVPGLFKDEMKRRR). At Thr-237 the chain carries Phosphothreonine; by PKA. Positions 237–342 (TLPTVPTPSE…MTVNGAPCPP (106 aa)) are disordered. A compositionally biased stretch (polar residues) spans 243–253 (TPSEGTNTSGA). Over residues 263 to 318 (APSPATLPATSSSLPSPATPSHGSPSSHGPPATHPTSPTPPSTAAGTTTATNGGTS) the composition is skewed to low complexity. Residues 319 to 328 (NCLQTPSSTS) are compositionally biased toward polar residues. Thr-334 carries the phosphothreonine; by PKA modification.

As to quaternary structure, exists as both a monomer and homodimer. Component of a PRC1-like complex. Interacts with CBX8, RING1 and RNF2. Interacts with CBX7. Interacts with PHC2. In terms of processing, phosphorylated. Homodimer formation is regulated by phosphorylation with only unphosphorylated proteins forming homodimers. As to expression, expressed in embryonic stem cells. Expressed in a variety of tumor cells and in neural tissues.

It localises to the nucleus. In terms of biological role, transcriptional repressor. Binds specifically to the DNA sequence 5'-GACTNGACT-3'. Has tumor suppressor activity. May play a role in control of cell proliferation and/or neural cell development. Regulates proliferation of early T progenitor cells by maintaining expression of HES1. Also plays a role in antero-posterior specification of the axial skeleton and negative regulation of the self-renewal activity of hematopoietic stem cells. Component of a Polycomb group (PcG) multiprotein PRC1-like complex, a complex class required to maintain the transcriptionally repressive state of many genes, including Hox genes, throughout development. PcG PRC1 complex acts via chromatin remodeling and modification of histones; it mediates monoubiquitination of histone H2A 'Lys-119', rendering chromatin heritably changed in its expressibility. Within the PRC1-like complex, regulates RNF2 ubiquitin ligase activity. This chain is Polycomb group RING finger protein 2 (Pcgf2), found in Mus musculus (Mouse).